A 399-amino-acid chain; its full sequence is Acetate kinase 2 (399 aa).

Mg(2+) is bound at residue Asn-10. Lys-17 is a binding site for ATP. Arg-89 is a substrate binding site. The active-site Proton donor/acceptor is the Asp-146. Residues 206–210 (HLGNG), 281–283 (DCR), and 329–333 (GIGEN) each bind ATP. Residue Glu-384 coordinates Mg(2+).

This sequence belongs to the acetokinase family. In terms of assembly, homodimer. Requires Mg(2+) as cofactor. The cofactor is Mn(2+).

It is found in the cytoplasm. The enzyme catalyses acetate + ATP = acetyl phosphate + ADP. It functions in the pathway metabolic intermediate biosynthesis; acetyl-CoA biosynthesis; acetyl-CoA from acetate: step 1/2. Catalyzes the formation of acetyl phosphate from acetate and ATP. Can also catalyze the reverse reaction. The polypeptide is Acetate kinase 2 (Neisseria meningitidis serogroup B (strain ATCC BAA-335 / MC58)).